We begin with the raw amino-acid sequence, 249 residues long: Ubiquinone/menaquinone biosynthesis C-methyltransferase UbiE (249 aa).

S-adenosyl-L-methionine is bound by residues Thr-72, Asp-93, and 121 to 122 (DA).

It belongs to the class I-like SAM-binding methyltransferase superfamily. MenG/UbiE family.

The catalysed reaction is a 2-demethylmenaquinol + S-adenosyl-L-methionine = a menaquinol + S-adenosyl-L-homocysteine + H(+). It catalyses the reaction a 2-methoxy-6-(all-trans-polyprenyl)benzene-1,4-diol + S-adenosyl-L-methionine = a 5-methoxy-2-methyl-3-(all-trans-polyprenyl)benzene-1,4-diol + S-adenosyl-L-homocysteine + H(+). It functions in the pathway quinol/quinone metabolism; menaquinone biosynthesis; menaquinol from 1,4-dihydroxy-2-naphthoate: step 2/2. The protein operates within cofactor biosynthesis; ubiquinone biosynthesis. In terms of biological role, methyltransferase required for the conversion of demethylmenaquinol (DMKH2) to menaquinol (MKH2) and the conversion of 2-polyprenyl-6-methoxy-1,4-benzoquinol (DDMQH2) to 2-polyprenyl-3-methyl-6-methoxy-1,4-benzoquinol (DMQH2). The sequence is that of Ubiquinone/menaquinone biosynthesis C-methyltransferase UbiE from Cellvibrio japonicus (strain Ueda107) (Pseudomonas fluorescens subsp. cellulosa).